The chain runs to 344 residues: L-rhamnose-proton symporter (344 aa).

A run of 10 helical transmembrane segments spans residues A4–A24, W38–L58, F68–I88, M101–I121, T137–L157, L175–A195, L214–I234, V259–G279, I290–L310, and V323–A343.

Belongs to the L-rhamnose transporter (TC 2.A.7.6) family.

It is found in the cell inner membrane. It catalyses the reaction L-rhamnopyranose(in) + H(+)(in) = L-rhamnopyranose(out) + H(+)(out). In terms of biological role, uptake of L-rhamnose across the cytoplasmic membrane with the concomitant transport of protons into the cell (symport system). The polypeptide is L-rhamnose-proton symporter (Escherichia coli O17:K52:H18 (strain UMN026 / ExPEC)).